The sequence spans 101 residues: Large ribosomal subunit protein uL23 (101 aa).

It belongs to the universal ribosomal protein uL23 family. As to quaternary structure, part of the 50S ribosomal subunit. Contacts protein L29, and trigger factor when it is bound to the ribosome.

Its function is as follows. One of the early assembly proteins it binds 23S rRNA. One of the proteins that surrounds the polypeptide exit tunnel on the outside of the ribosome. Forms the main docking site for trigger factor binding to the ribosome. The protein is Large ribosomal subunit protein uL23 of Wigglesworthia glossinidia brevipalpis.